A 193-amino-acid chain; its full sequence is MNKDHEEQLEINEVSQKNKYKSIIESLLFMSGEPINIKDLATILNCKQDKVSSLLNEMKNSYVGKDRGIKILIHNRAVQLVTKPENSIYVEKLLKTNIRQSLSQAALETLSIIAYKQPITRVAIDEIRGVKSDRAIYTLLEKNIIKECGRLDVPGKPILYGTTEEFLKFFGLDSIEAIPNLEDLLKEFSKEEN.

This sequence belongs to the ScpB family. As to quaternary structure, homodimer. Homodimerization may be required to stabilize the binding of ScpA to the Smc head domains. Component of a cohesin-like complex composed of ScpA, ScpB and the Smc homodimer, in which ScpA and ScpB bind to the head domain of Smc. The presence of the three proteins is required for the association of the complex with DNA.

The protein resides in the cytoplasm. Participates in chromosomal partition during cell division. May act via the formation of a condensin-like complex containing Smc and ScpA that pull DNA away from mid-cell into both cell halves. The protein is Segregation and condensation protein B of Clostridium botulinum (strain Kyoto / Type A2).